The sequence spans 485 residues: NADH-quinone oxidoreductase subunit N (485 aa).

Transmembrane regions (helical) follow at residues 10–30 (AMLPLLIVGLTVVVVMLSIAW), 35–55 (FINATLTVIGLNLALLSLYFV), 75–95 (FYIGLVIVASLATSTFAYPWL), 104–124 (EFYLLVLIATMGGILLASANH), 125–145 (LASLFLGIELISLPLFGLIGY), 159–179 (YMLLSAAASSFLLFGMALLYA), 203–223 (ILAGLGMMIVGLGFKLSLVPF), 235–255 (PAPVSTFLATASKIAIFAVVM), 271–291 (LVLSLIAVASILFGNLMAISQ), 297–317 (LLGYSSIAHLGYLLIALVAVQ), 327–347 (GVYLAGYLFSSLGAFGVVSLM), 374–394 (AVMTVMMLSLAGIPMTLGFIG), 408–427 (WWLTGAVVLGSAIGLYYYLR), and 449–469 (ALTAGGVVVLISAILVLVLGI).

This sequence belongs to the complex I subunit 2 family. As to quaternary structure, NDH-1 is composed of 13 different subunits. Subunits NuoA, H, J, K, L, M, N constitute the membrane sector of the complex.

Its subcellular location is the cell inner membrane. It catalyses the reaction a quinone + NADH + 5 H(+)(in) = a quinol + NAD(+) + 4 H(+)(out). Functionally, NDH-1 shuttles electrons from NADH, via FMN and iron-sulfur (Fe-S) centers, to quinones in the respiratory chain. The immediate electron acceptor for the enzyme in this species is believed to be ubiquinone. Couples the redox reaction to proton translocation (for every two electrons transferred, four hydrogen ions are translocated across the cytoplasmic membrane), and thus conserves the redox energy in a proton gradient. This chain is NADH-quinone oxidoreductase subunit N, found in Yersinia enterocolitica serotype O:8 / biotype 1B (strain NCTC 13174 / 8081).